The sequence spans 389 residues: 11-beta-hydroxysteroid dehydrogenase-like 5 (389 aa).

A helical; Signal-anchor for type II membrane protein membrane pass occupies residues 11–31 (LVAPPATMVVMAFAWPLLSFI). NADP(+) is bound by residues 56–82 (GASS…VARR) and Asp107. Ser186 provides a ligand contact to substrate. Catalysis depends on Tyr199, which acts as the Proton acceptor. NADP(+) is bound by residues 199–203 (YSAAK) and Lys203. The interval 337–381 (LMLEGGPPRVPASPPRYTASPPHYTASPPRYPASPPRYPASPPRF) is disordered. The span at 365 to 378 (PRYPASPPRYPASP) shows a compositional bias: pro residues.

The protein belongs to the short-chain dehydrogenases/reductases (SDR) family.

It is found in the membrane. The polypeptide is 11-beta-hydroxysteroid dehydrogenase-like 5 (HSD5) (Arabidopsis thaliana (Mouse-ear cress)).